Here is a 101-residue protein sequence, read N- to C-terminus: Urease subunit beta (101 aa).

This sequence belongs to the urease beta subunit family. Heterotrimer of UreA (gamma), UreB (beta) and UreC (alpha) subunits. Three heterotrimers associate to form the active enzyme.

Its subcellular location is the cytoplasm. It carries out the reaction urea + 2 H2O + H(+) = hydrogencarbonate + 2 NH4(+). It functions in the pathway nitrogen metabolism; urea degradation; CO(2) and NH(3) from urea (urease route): step 1/1. This chain is Urease subunit beta, found in Dinoroseobacter shibae (strain DSM 16493 / NCIMB 14021 / DFL 12).